The sequence spans 36 residues: MTASYSPSISVPLVGLVFPAITMVLSFIYIERDEIV.

A helical membrane pass occupies residues 9–29 (ISVPLVGLVFPAITMVLSFIY).

Belongs to the PsaI family.

The protein resides in the plastid. Its subcellular location is the chloroplast thylakoid membrane. May help in the organization of the PsaL subunit. The sequence is that of Photosystem I reaction center subunit VIII from Huperzia lucidula (Shining clubmoss).